Reading from the N-terminus, the 454-residue chain is Exopolyphosphatase PRUNE1 (454 aa).

Met-1 carries the N-acetylmethionine modification. Mn(2+)-binding residues include Asp-28, Asp-30, Asp-106, and Asp-179. The DHH motif motif lies at 106–108; the sequence is DHH. An essential for homodimerization region spans residues 394–421; that stretch reads SLISGLSQDEEDPPLPPTPMNSLVDECP. The tract at residues 397-420 is disordered; the sequence is SGLSQDEEDPPLPPTPMNSLVDEC. Position 400 is a phosphoserine (Ser-400). The residue at position 411 (Thr-411) is a Phosphothreonine. Ser-415 carries the phosphoserine modification.

This sequence belongs to the PPase class C family. Prune subfamily. Homooligomer. Able to homodimerize via its C-terminal domain. Interacts with NME1. Interacts with GSK3; at focal adhesion complexes where paxillin and vinculin are colocalized. Interacts with alpha and beta tubulin. Mn(2+) serves as cofactor.

The protein resides in the cytoplasm. The protein localises to the nucleus. It is found in the cell junction. Its subcellular location is the focal adhesion. It carries out the reaction diphosphate + H2O = 2 phosphate + H(+). With respect to regulation, activated by magnesium ions and inhibited by manganese ions. Inhibited by dipyridamole, moderately sensitive to IBMX and inhibited by vinpocetine. In terms of biological role, phosphodiesterase (PDE) that has higher activity toward cAMP than cGMP, as substrate. Plays a role in cell proliferation, migration and differentiation, and acts as a negative regulator of NME1. Plays a role in the regulation of neurogenesis. Involved in the regulation of microtubule polymerization. This is Exopolyphosphatase PRUNE1 (Prune1) from Mus musculus (Mouse).